The chain runs to 65 residues: Large ribosomal subunit protein bL33c (65 aa).

This sequence belongs to the bacterial ribosomal protein bL33 family.

It is found in the plastid. Its subcellular location is the chloroplast. The sequence is that of Large ribosomal subunit protein bL33c from Chaetosphaeridium globosum (Charophycean green alga).